Here is a 324-residue protein sequence, read N- to C-terminus: Holliday junction branch migration complex subunit RuvB (324 aa).

The large ATPase domain (RuvB-L) stretch occupies residues 1–168 (MEDLALRPKT…FGIVEHLEYY (168 aa)). ATP-binding residues include tyrosine 14, isoleucine 15, glycine 48, lysine 51, threonine 52, threonine 53, aspartate 97, threonine 146, tyrosine 168, and arginine 205. Residue threonine 52 coordinates Mg(2+). Positions 169 to 239 (TPEELAQGVM…RALEALAALG (71 aa)) are small ATPAse domain (RuvB-S). Residues 242–324 (ELGLEKRDRE…PPPVGPLLEP (83 aa)) are head domain (RuvB-H). Residues arginine 297 and arginine 302 each contribute to the DNA site.

This sequence belongs to the RuvB family. As to quaternary structure, homohexamer. Forms a complex with RuvA. Electron microscopic images suggest 2 closely interacting RuvA tetramers sandwich the HJ DNA; each tetramer associates with an RuvB hexamer. Forms 2 complexes with Holliday junction (HJ) DNA which probably have 1 and 2 RuvA tetramers per complex (called complex I and complex II). Forms an RuvA(8)-RuvB(12)-Holliday junction (HJ) complex. HJ DNA is sandwiched between 2 RuvA tetramers; dsDNA enters through RuvA and exits via RuvB. An RuvB hexamer assembles on each DNA strand where it exits the tetramer. Each RuvB hexamer is contacted by two RuvA subunits (via domain III) on 2 adjacent RuvB subunits; this complex drives branch migration. In the full resolvosome a probable DNA-RuvA(4)-RuvB(12)-RuvC(2) complex forms which resolves the HJ. It depends on Mg(2+) as a cofactor.

It localises to the cytoplasm. It carries out the reaction ATP + H2O = ADP + phosphate + H(+). The activity of RuvB is enhanced by E.coli RuvA. Its function is as follows. The RuvA-RuvB-RuvC complex processes Holliday junction (HJ) DNA during genetic recombination and DNA repair, while the RuvA-RuvB complex plays an important role in the rescue of blocked DNA replication forks via replication fork reversal (RFR). RuvA specifically binds to HJ cruciform DNA, conferring on it an open structure. The RuvB hexamer acts as an ATP-dependent pump, pulling dsDNA into and through the RuvAB complex. RuvB forms 2 homohexamers on either side of HJ DNA bound by 1 or 2 RuvA tetramers; 4 subunits per hexamer contact DNA at a time. Coordinated motions by a converter formed by DNA-disengaged RuvB subunits stimulates ATP hydrolysis and nucleotide exchange. Immobilization of the converter enables RuvB to convert the ATP-contained energy into a lever motion, pulling 2 nucleotides of DNA out of the RuvA tetramer per ATP hydrolyzed, thus driving DNA branch migration. The RuvB motors rotate together with the DNA substrate, which together with the progressing nucleotide cycle form the mechanistic basis for DNA recombination by continuous HJ branch migration. Branch migration allows RuvC to scan DNA until it finds its consensus sequence, where it cleaves and resolves cruciform DNA. RuvB is a Mg(2+)-dependent, DNA-dependent ATPase with an equal preference for supercoiled and linear dsDNA; all (d)NTPs tested were efficiently hydrolyzed. Promotes Holliday junction (HJ) dissociation at 60 degrees Celsius in the presence of ATP but not ATP-gamma-S or ADP; (d)ATP, (d)CTP and dTTP also power dissociation in the absence of any RuvA. RuvA stimulates the ATPase of RuvB in the presence of dsDNA and HJ branch migration by RuvB. Excess RuvB stimulates some branch migration in vitro even in the presence of mutant RuvA. This is Holliday junction branch migration complex subunit RuvB from Thermus thermophilus (strain ATCC 27634 / DSM 579 / HB8).